The primary structure comprises 474 residues: Trigger factor (474 aa).

The 88-residue stretch at 174 to 261 folds into the PPIase FKBP-type domain; sequence GDIAVVSFKG…LKDLKEKELP (88 aa). The disordered stretch occupies residues 435–474; sequence VKEKTTKTSKATKTSKTTKATKTASKTTKTTKTQNKKEKK. Residues 442-467 are compositionally biased toward low complexity; sequence TSKATKTSKTTKATKTASKTTKTTKT.

The protein belongs to the FKBP-type PPIase family. Tig subfamily.

The protein resides in the cytoplasm. The enzyme catalyses [protein]-peptidylproline (omega=180) = [protein]-peptidylproline (omega=0). Involved in protein export. Acts as a chaperone by maintaining the newly synthesized protein in an open conformation. Functions as a peptidyl-prolyl cis-trans isomerase. The chain is Trigger factor from Prochlorococcus marinus (strain AS9601).